The following is a 1397-amino-acid chain: DNA-directed RNA polymerase subunit beta' (1397 aa).

Cys75, Cys77, Cys90, and Cys93 together coordinate Zn(2+). Residues Asp465, Asp467, and Asp469 each coordinate Mg(2+). Cys819, Cys893, Cys900, and Cys903 together coordinate Zn(2+).

Belongs to the RNA polymerase beta' chain family. In terms of assembly, the RNAP catalytic core consists of 2 alpha, 1 beta, 1 beta' and 1 omega subunit. When a sigma factor is associated with the core the holoenzyme is formed, which can initiate transcription. Mg(2+) serves as cofactor. Requires Zn(2+) as cofactor.

It carries out the reaction RNA(n) + a ribonucleoside 5'-triphosphate = RNA(n+1) + diphosphate. Functionally, DNA-dependent RNA polymerase catalyzes the transcription of DNA into RNA using the four ribonucleoside triphosphates as substrates. The sequence is that of DNA-directed RNA polymerase subunit beta' from Acinetobacter baumannii (strain SDF).